The primary structure comprises 259 residues: Ubiquinone biosynthesis protein COQ4 homolog, mitochondrial (259 aa).

Positions 162, 163, 166, and 178 each coordinate Zn(2+).

It belongs to the COQ4 family. Component of a multi-subunit COQ enzyme complex. The cofactor is Zn(2+).

It is found in the mitochondrion inner membrane. The catalysed reaction is a 4-hydroxy-3-methoxy-5-(all-trans-polyprenyl)benzoate + H(+) = a 2-methoxy-6-(all-trans-polyprenyl)phenol + CO2. Its pathway is cofactor biosynthesis; ubiquinone biosynthesis. In terms of biological role, lyase that catalyzes the C1-decarboxylation of 4-hydroxy-3-methoxy-5-(all-trans-polyprenyl)benzoic acid into 2-methoxy-6-(all-trans-polyprenyl)phenol during ubiquinone biosynthesis. The chain is Ubiquinone biosynthesis protein COQ4 homolog, mitochondrial from Bombyx mori (Silk moth).